The sequence spans 328 residues: Serine protease 48 (328 aa).

A signal peptide spans 1–20; the sequence is MGPAGCAFTLLLLLGISVCG. The 240-residue stretch at 28-267 folds into the Peptidase S1 domain; the sequence is VVGGQDAAAG…YQKWINATIS (240 aa). A disulfide bridge connects residues Cys-53 and Cys-69. Active-site charge relay system residues include His-68 and Asp-114. 3 cysteine pairs are disulfide-bonded: Cys-148-Cys-226, Cys-181-Cys-205, and Cys-216-Cys-244. The active-site Charge relay system is Ser-220. An N-linked (GlcNAc...) asparagine glycan is attached at Asn-263.

This sequence belongs to the peptidase S1 family.

It is found in the secreted. The protein is Serine protease 48 (PRSS48) of Homo sapiens (Human).